Reading from the N-terminus, the 207-residue chain is Arginine exporter protein ArgO (207 aa).

Helical transmembrane passes span 1–21 (MLST…PLGP), 42–62 (LCAI…SALL), 67–87 (LLLQ…GWGA), 111–131 (VVAI…DTIV), 150–170 (FGAA…AAWF), and 185–205 (GFIC…GLLI).

Belongs to the LysE/ArgO transporter (TC 2.A.75) family.

The protein resides in the cell inner membrane. The enzyme catalyses L-arginine(in) = L-arginine(out). Its function is as follows. Involved in the export of arginine. Important to control the intracellular level of arginine and the correct balance between arginine and lysine. This Photorhabdus laumondii subsp. laumondii (strain DSM 15139 / CIP 105565 / TT01) (Photorhabdus luminescens subsp. laumondii) protein is Arginine exporter protein ArgO.